The sequence spans 396 residues: Decapping and exoribonuclease protein (396 aa).

A compositionally biased stretch (basic and acidic residues) spans 1–20; sequence MDPRGTKRGAEKTEVAEPRN. The tract at residues 1–37 is disordered; sequence MDPRGTKRGAEKTEVAEPRNKLPRPAPSLPTDPALYS. Substrate contacts are provided by residues Arg-58, Glu-101, and 131 to 133; that span reads WRG. A Mg(2+)-binding site is contributed by Glu-192. Substrate contacts are provided by Cys-217 and Glu-234. Residues Glu-234, Asp-236, Glu-253, and Leu-254 each contribute to the Mg(2+) site. Residues Lys-255 and Gln-280 each contribute to the substrate site. Thr-392 carries the post-translational modification Phosphothreonine. At Ser-394 the chain carries Phosphoserine.

Belongs to the DXO/Dom3Z family. Requires Mg(2+) as cofactor. In terms of tissue distribution, ubiquitously expressed.

The protein resides in the nucleus. The catalysed reaction is a 5'-end triphospho-ribonucleoside in mRNA + H2O = a 5'-end phospho-ribonucleoside in mRNA + diphosphate + H(+). The enzyme catalyses a 5'-end NAD(+)-phospho-ribonucleoside in mRNA + H2O = a 5'-end phospho-ribonucleoside in mRNA + NAD(+) + H(+). It carries out the reaction a 5'-end NAD(+)-phospho-ribonucleoside in snoRNA + H2O = a 5'-end phospho-ribonucleoside in snoRNA + NAD(+) + H(+). It catalyses the reaction a 5'-end (N(7)-methyl 5'-triphosphoguanosine)-ribonucleoside-ribonucleotide in mRNA + H2O = a (N(7)-methyl 5'-triphosphoguanosine)-nucleoside + a 5'-end phospho-ribonucleoside in mRNA + H(+). The catalysed reaction is a 5'-end FAD-phospho-ribonucleoside in mRNA + H2O = a 5'-end phospho-ribonucleoside in mRNA + FAD + H(+). The enzyme catalyses a 5'-end CoA-ribonucleoside in mRNA + H2O = 3'-dephospho-CoA + a 5'-end phospho-ribonucleoside in mRNA + H(+). In terms of biological role, decapping enzyme for NAD-capped RNAs: specifically hydrolyzes the nicotinamide adenine dinucleotide (NAD) cap from a subset of RNAs by removing the entire NAD moiety from the 5'-end of an NAD-capped RNA. The NAD-cap is present at the 5'-end of some RNAs and snoRNAs. In contrast to the canonical 5'-end N7 methylguanosine (m7G) cap, the NAD cap promotes mRNA decay. Preferentially acts on NAD-capped transcripts in response to environmental stress. Also acts as a non-canonical decapping enzyme that removes the entire cap structure of m7G capped or incompletely capped RNAs and mediates their subsequent degradation. Specifically degrades pre-mRNAs with a defective 5'-end m7G cap and is part of a pre-mRNA capping quality control. Has decapping activity toward incomplete 5'-end m7G cap mRNAs such as unmethylated 5'-end-capped RNA (cap0), while it has no activity toward 2'-O-ribose methylated m7G cap (cap1). In contrast to canonical decapping enzymes DCP2 and NUDT16, which cleave the cap within the triphosphate linkage, the decapping activity releases the entire cap structure GpppN and a 5'-end monophosphate RNA. Also has 5'-3' exoribonuclease activities: The 5'-end monophosphate RNA is then degraded by the 5'-3' exoribonuclease activity, enabling this enzyme to decap and degrade incompletely capped mRNAs. Also possesses RNA 5'-pyrophosphohydrolase activity by hydrolyzing the 5'-end triphosphate to release pyrophosphates. Exhibits decapping activity towards FAD-capped RNAs. Exhibits decapping activity towards dpCoA-capped RNAs in vitro. The polypeptide is Decapping and exoribonuclease protein (Homo sapiens (Human)).